The following is an 880-amino-acid chain: Alanine--tRNA ligase (880 aa).

Belongs to the class-II aminoacyl-tRNA synthetase family.

It is found in the cytoplasm. The enzyme catalyses tRNA(Ala) + L-alanine + ATP = L-alanyl-tRNA(Ala) + AMP + diphosphate. Catalyzes the attachment of alanine to tRNA(Ala) in a two-step reaction: alanine is first activated by ATP to form Ala-AMP and then transferred to the acceptor end of tRNA(Ala). Also edits incorrectly charged Ser-tRNA(Ala) and Gly-tRNA(Ala) via its editing domain. The sequence is that of Alanine--tRNA ligase (alaS) from Lactiplantibacillus plantarum (strain ATCC BAA-793 / NCIMB 8826 / WCFS1) (Lactobacillus plantarum).